Here is a 704-residue protein sequence, read N- to C-terminus: Chloride intracellular channel protein 6 (704 aa).

The segment covering M1–G13 has biased composition (low complexity). The segment at M1–A446 is disordered. The span at E39–E48 shows a compositional bias: acidic residues. Phosphoserine is present on S44. Positions R67–T83 are enriched in basic and acidic residues. The span at P90–E100 shows a compositional bias: low complexity. A compositionally biased stretch (basic and acidic residues) spans P121–V147. 13 tandem repeats follow at residues G157 to L166, G167 to A176, G177 to V186, G187 to A196, G197 to L206, G207 to A216, G217 to V226, G227 to A236, G237 to V246, G247 to A256, G257 to A266, G267 to A276, and G277 to A286. The 13 X 10 AA tandem repeat of G-D-[SNG]-[VIM]-[DEQ]-A-[EAG]-[GDVE]-[PRG]-[LAVP] stretch occupies residues G157–A282. Residues E295–P306 are compositionally biased toward polar residues. 2 stretches are compositionally biased toward basic and acidic residues: residues A350–G360 and E371–E385. Residues S397 and S442 each carry the phosphoserine modification. A compositionally biased stretch (basic and acidic residues) spans G434–A446. The G-site signature appears at C487–S490. A helical transmembrane segment spans residues F489–V509. The GST C-terminal domain maps to Y556 to K704.

Belongs to the chloride channel CLIC family. As to quaternary structure, monomer (soluble state). Interacts with dopamine receptors DRD2, DRD3 and DRD4. Phosphorylated. In terms of tissue distribution, expressed in brain, placenta, pancreas, liver, lung, heart, kidney, liver, spleen, soleus muscle, and brown fat.

It is found in the cytoplasm. It localises to the cell membrane. The enzyme catalyses chloride(in) = chloride(out). Channel activity is redox- and pH-regulated. Inhibited by IAA-94. Its function is as follows. In the soluble state, catalyzes glutaredoxin-like thiol disulfide exchange reactions with reduced glutathione as electron donor. Can insert into membranes and form voltage-dependent chloride-selective channels. The channel opens upon membrane depolarization at positive voltages and closes at negative membrane voltages. May play a critical role in water-secreting cells, possibly through the regulation of chloride ion transport. This chain is Chloride intracellular channel protein 6, found in Homo sapiens (Human).